Here is a 422-residue protein sequence, read N- to C-terminus: MGFSSLVCVLFFFLGVKVYCQYESYQWDEDYDQEPDDVYQTEFQFQQNINYEAPFHQHTLGCASECFCPPNFPSSMYCDNRKLKTIPNIPAHIQQVYLQFNEIEAVTADSFINATHLKEINLSHNKIKSQKIDHGVFATLPNLLQLHLQHNNLEDFPFPLPKSLERIFLGYNEISRLQTNAVNGLVNLTMLDLCFNKIDDSVLQEKVLAKMEKLMQLNLCNNRLESMPPGLPSSLMYLSLENNSISSIPENYFNKLPKLHALRISHNKLQDIPYNIFNLSNLIELNVGHNKLKQAFYIPRNLEHLYLENNEIENVNVTVMCPSVDPLHYHHLTHIRIDQNKLKAPISSYIFLCFPHIHTIYYGEQQSTNGQTIQLKTQVFRRFQDDGDSEDHDDHHEGPEEEGTEENIDAHYYGSQEWQETI.

A signal peptide spans 1-20; that stretch reads MGFSSLVCVLFFFLGVKVYC. Residues 21-27 constitute a propeptide that is removed on maturation; it reads QYESYQW. 6 positions are modified to sulfotyrosine: Y22, Y25, Y31, Y39, Y51, and Y77. Positions 53-91 constitute an LRRNT domain; it reads APFHQHTLGCASECFCPPNFPSSMYCDNRKLKTIPNIPA. LRR repeat units follow at residues 92–113, 116–129, 142–164, 165–184, 187–207, 213–233, 234–255, 258–280, 281–294, 301–322, and 331–353; these read HIQQVYLQFNEIEAVTADSFIN, HLKEINLSHNKIKS, NLLQLHLQHNNLEDFPFPLPKSL, ERIFLGYNEISRLQTNAVNG, NLTMLDLCFNKIDDSVLQEKV, KLMQLNLCNNRLESMPPGLPS, SLMYLSLENNSISSIPENYFNK, KLHALRISHNKLQDIPYNIFNLS, NLIELNVGHNKLKQ, NLEHLYLENNEIENVNVTVMCP, and HLTHIRIDQNKLKAPISSYIFLC. 2 N-linked (GlcNAc...) asparagine glycosylation sites follow: N113 and N121. A glycan (N-linked (GlcNAc...) asparagine) is linked at N187. 2 N-linked (GlcNAc...) asparagine glycosylation sites follow: N242 and N278. N-linked (GlcNAc...) asparagine glycosylation is present at N316. Cysteines 321 and 353 form a disulfide. The interval 385–422 is disordered; it reads DDGDSEDHDDHHEGPEEEGTEENIDAHYYGSQEWQETI. A sulfotyrosine mark is found at Y412 and Y413.

The protein belongs to the small leucine-rich proteoglycan (SLRP) family. SLRP class II subfamily. Binds the alpha(V)beta(3)-integrin. The N-terminus is blocked. In terms of processing, glycosylated; contains keratan sulfate. Post-translationally, sulfated on tyrosine residue(s). As to expression, bone specific (at protein level).

It is found in the secreted. The protein localises to the extracellular space. The protein resides in the extracellular matrix. Functionally, may be implicated in biomineralization processes. Has a function in binding of osteoblasts via the alpha(V)beta(3)-integrin. In Bos taurus (Bovine), this protein is Osteomodulin (OMD).